The primary structure comprises 325 residues: 2-dehydro-3-deoxygluconokinase (325 aa).

Substrate is bound by residues 49–53 (GSEAN), tyrosine 105, 121–123 (YYR), and arginine 181. ATP contacts are provided by residues 179–181 (NIR), 240–245 (KLGAEG), and 269–272 (GAGD). Residues aspartate 272 and aspartate 308 each coordinate substrate. Aspartate 272 acts as the Proton acceptor in catalysis.

It belongs to the carbohydrate kinase PfkB family. Homohexamer; trimer of dimers.

It catalyses the reaction 2-dehydro-3-deoxy-D-gluconate + ATP = 2-dehydro-3-deoxy-6-phospho-D-gluconate + ADP + H(+). It participates in carbohydrate acid metabolism; 2-dehydro-3-deoxy-D-gluconate degradation; D-glyceraldehyde 3-phosphate and pyruvate from 2-dehydro-3-deoxy-D-gluconate: step 1/2. Functionally, involved in the degradation of glucose via the semi-phosphorylative Entner-Doudoroff pathway. Catalyzes the phosphorylation of 2-keto-3-deoxygluconate (KDG) yielding 2-keto-3-deoxy-6-phosphogluconate (KDPG). This is 2-dehydro-3-deoxygluconokinase (kdgK) from Thermoproteus tenax.